A 340-amino-acid chain; its full sequence is Protein-arginine kinase (340 aa).

Positions 21–242 (VVLSSRIRLA…EQIIMQERVA (222 aa)) constitute a Phosphagen kinase C-terminal domain. ATP-binding positions include 24–28 (SSRIR), His-79, Arg-113, 164–168 (RASVM), and 195–200 (RGIYGE).

The protein belongs to the ATP:guanido phosphotransferase family.

It catalyses the reaction L-arginyl-[protein] + ATP = N(omega)-phospho-L-arginyl-[protein] + ADP + H(+). Its function is as follows. Catalyzes the specific phosphorylation of arginine residues in proteins. The chain is Protein-arginine kinase from Listeria innocua serovar 6a (strain ATCC BAA-680 / CLIP 11262).